The following is a 670-amino-acid chain: Leiomodin-3 (670 aa).

4 disordered regions span residues 34 to 72 (EMDDIAPDERVPVGLRQKDASHEMTVRDCTEPESEEEID), 94 to 120 (EIAPDERVPVGMRQRDQTDKPPTGSFD), 139 to 165 (EEERVPTTLLPSQKTNEEHEAKNEDKV), and 202 to 274 (EDKV…NWVP). 5 stretches are compositionally biased toward basic and acidic residues: residues 40–63 (PDERVPVGLRQKDASHEMTVRDCT), 97–112 (PDERVPVGMRQRDQTD), 153–163 (TNEEHEAKNED), 205–214 (VCDKPVKTDL), and 249–261 (TETKVNEEKKEDS). Residues 150–183 (SQKTNEEHEAKNEDKVEELELVYEEIVEEVEGGQ) adopt a coiled-coil conformation. Positions 464 to 494 (DRQRQQRMEEQKLQQMKEQRKVMEMYEDSLN) form a coiled coil. The disordered stretch occupies residues 517 to 556 (NGAEDIPEDSPEPSPQPSPPHQLCKTQHLAPQQHPPNLST). The region spanning 637–656 (PRDHLLSEIRQSNVAYLKAV) is the WH2 domain.

This sequence belongs to the tropomodulin family. Expressed in muscle (at protein level).

The protein resides in the cytoplasm. The protein localises to the myofibril. Its subcellular location is the sarcomere. It localises to the a band. It is found in the m line. The protein resides in the cytoskeleton. Functionally, essential for the organization of sarcomeric thin filaments in skeletal muscle. This Danio rerio (Zebrafish) protein is Leiomodin-3.